A 120-amino-acid chain; its full sequence is UPF0102 protein TW312 (120 aa).

Belongs to the UPF0102 family.

In Tropheryma whipplei (strain TW08/27) (Whipple's bacillus), this protein is UPF0102 protein TW312.